A 1202-amino-acid polypeptide reads, in one-letter code: Probable DNA polymerase (1202 aa).

This sequence belongs to the DNA polymerase type-B family.

It is found in the mitochondrion. The catalysed reaction is DNA(n) + a 2'-deoxyribonucleoside 5'-triphosphate = DNA(n+1) + diphosphate. This is Probable DNA polymerase from Ascobolus immersus.